A 49-amino-acid chain; its full sequence is Large ribosomal subunit protein bL33 (49 aa).

Belongs to the bacterial ribosomal protein bL33 family.

The protein is Large ribosomal subunit protein bL33 of Clostridium botulinum (strain ATCC 19397 / Type A).